Here is a 178-residue protein sequence, read N- to C-terminus: Ribosome maturation factor RimP (178 aa).

It belongs to the RimP family.

It is found in the cytoplasm. Its function is as follows. Required for maturation of 30S ribosomal subunits. This Cutibacterium acnes (strain DSM 16379 / KPA171202) (Propionibacterium acnes) protein is Ribosome maturation factor RimP.